The sequence spans 306 residues: Lymphotoxin-beta (306 aa).

Residues M1–T27 lie on the Cytoplasmic side of the membrane. A helical; Signal-anchor for type II membrane protein membrane pass occupies residues S28 to P48. Over Q49–G306 the chain is Extracellular. Disordered regions lie at residues A63 to A112 and P127 to P151. Residues P74 to S85 show a composition bias toward low complexity. Residues Q95–A112 are compositionally biased toward polar residues. N98 is a glycosylation site (N-linked (GlcNAc...) asparagine). Residues P154 to V305 enclose the THD domain. N-linked (GlcNAc...) asparagine glycosylation is present at N284.

The protein belongs to the tumor necrosis factor family. Heterotrimer of either two LTB and one LTA subunits or (less prevalent) two LTA and one LTB subunits.

The protein resides in the membrane. In terms of biological role, cytokine that binds to LTBR/TNFRSF3. May play a specific role in immune response regulation. Provides the membrane anchor for the attachment of the heterotrimeric complex to the cell surface. The sequence is that of Lymphotoxin-beta (Ltb) from Mus musculus (Mouse).